The primary structure comprises 452 residues: MEKQYLTVTALTRYIKTKIEYDPHLQSVWLKGEISNFKNHSRGHMYFTLKDENARIAAVMFAGHNRNIKFKPENGMKVLVKGKISVYEASGSYQIYIQDMQPDGVGNLHLAYEQLKVRLEEEGLFSQVYKKAIPPYAKTIGVITSPTGAAIRDIITTIKRRYPIGNVIVFPVLVQGESAAPSIVQAIRTANEMGEIDVLIVGRGGGSIEELWAFNEEMVARAIFKSEIPIISAVGHETDFTIADFVADLRAPTPTAAAELAAPNIIELQEKVLQRTLRLQRAMRELVHKKEEKLQVLQKSYAFRYPRQVYEQKEEQLDRALEQLVLAKERYIDKKVNQLKQLSFYLEKHHPSQKIMQTKVAVETLQKQLQREMQTLLQTKEFAFVRAAQKLEALSPLKVMMRGYGLVYDEEKQVLKSVKDVSLGDAVSVQLQDGILDCSVSGIEERELNNGK.

This sequence belongs to the XseA family. In terms of assembly, heterooligomer composed of large and small subunits.

The protein localises to the cytoplasm. It catalyses the reaction Exonucleolytic cleavage in either 5'- to 3'- or 3'- to 5'-direction to yield nucleoside 5'-phosphates.. Bidirectionally degrades single-stranded DNA into large acid-insoluble oligonucleotides, which are then degraded further into small acid-soluble oligonucleotides. The sequence is that of Exodeoxyribonuclease 7 large subunit from Bacillus cereus (strain G9842).